Here is a 982-residue protein sequence, read N- to C-terminus: Dual specificity protein kinase Ttk (982 aa).

Disordered stretches follow at residues 178–204 (LSHE…DGTC), 211–230 (TFLH…PVWR), and 493–574 (AEHQ…PLRL). The segment covering 211-223 (TFLHSDQKFSPQE) has biased composition (polar residues). Residues 510 to 533 (MKREENPVKAPEDHQKPFSKETSS) are compositionally biased toward basic and acidic residues. Residues 653 to 916 (FFIFKMIGRG…IAELLDHPYL (264 aa)) enclose the Protein kinase domain. ATP contacts are provided by residues 659-667 (IGRGGSSKV) and Lys681. The Proton acceptor role is filled by Asp775.

The protein belongs to the protein kinase superfamily. Ser/Thr protein kinase family. Requires Mg(2+) as cofactor. As to expression, barely detectable in adult somatic tissues. Expressed in immature germ cells that have not completed meiosis. In ovary, expressed predominantly in previtellogenic oocytes. In testis, expressed in primary and secondary spermatocytes, but not mature spermatozoa.

The catalysed reaction is L-seryl-[protein] + ATP = O-phospho-L-seryl-[protein] + ADP + H(+). It carries out the reaction L-threonyl-[protein] + ATP = O-phospho-L-threonyl-[protein] + ADP + H(+). The enzyme catalyses L-tyrosyl-[protein] + ATP = O-phospho-L-tyrosyl-[protein] + ADP + H(+). Its function is as follows. Involved in mitotic spindle assembly checkpoint signaling, a process that delays anaphase until chromosomes are bioriented on the spindle, and in the repair of incorrect mitotic kinetochore-spindle microtubule attachments. Required to prevent chromosome segregation errors during meiosis. Required for fin and heart regeneration. In Danio rerio (Zebrafish), this protein is Dual specificity protein kinase Ttk (ttk).